The following is a 478-amino-acid chain: Cytochrome c-552 (478 aa).

Residues methionine 1 to alanine 26 form the signal peptide. Histidine 94 contacts heme c. Heme-binding residues include cysteine 122, cysteine 125, and lysine 126. Heme c is bound by residues cysteine 160, cysteine 163, histidine 164, cysteine 209, cysteine 212, and histidine 213. Ca(2+) contacts are provided by glutamate 215, tyrosine 216, lysine 261, and glutamine 263. Position 216 (tyrosine 216) interacts with substrate. Residue histidine 264 participates in substrate binding. The heme c site is built by histidine 275, cysteine 282, cysteine 285, histidine 286, histidine 301, cysteine 314, cysteine 317, histidine 318, and histidine 393.

It belongs to the cytochrome c-552 family. Ca(2+) is required as a cofactor. Heme c serves as cofactor.

The protein localises to the periplasm. It catalyses the reaction 6 Fe(III)-[cytochrome c] + NH4(+) + 2 H2O = 6 Fe(II)-[cytochrome c] + nitrite + 8 H(+). It functions in the pathway nitrogen metabolism; nitrate reduction (assimilation). In terms of biological role, catalyzes the reduction of nitrite to ammonia, consuming six electrons in the process. The chain is Cytochrome c-552 from Salmonella paratyphi A (strain ATCC 9150 / SARB42).